The chain runs to 365 residues: ADP-ribosylhydrolase ARH3 (365 aa).

Mg(2+) is bound by residues glutamate 42, threonine 77, aspartate 78, and aspartate 79. Aspartate 78 lines the substrate pocket. Substrate is bound by residues 147–153 (KGSYGNG), histidine 183, leucine 236, and isoleucine 272. Mg(2+) is bound by residues aspartate 315, aspartate 317, and threonine 318.

The protein belongs to the ADP-ribosylglycohydrolase family. Monomer. Requires Mg(2+) as cofactor.

The protein resides in the nucleus. The protein localises to the cytoplasm. It is found in the chromosome. It localises to the mitochondrion matrix. It carries out the reaction [(1''-&gt;2')-ADP-alpha-D-ribose](n) + H2O = [(1''-&gt;2')-ADP-alpha-D-ribose](n-1) + ADP-D-ribose. It catalyses the reaction 1''-O-acetyl-ADP-alpha-D-ribose + H2O = ADP-D-ribose + acetate + H(+). The catalysed reaction is O-(ADP-D-ribosyl)-L-seryl-[protein] + H2O = ADP-D-ribose + L-seryl-[protein]. The enzyme catalyses alpha-NAD(+) + H2O = ADP-D-ribose + nicotinamide + H(+). Its activity is regulated as follows. The protein undergoes a dramatic conformational switch from closed to open states upon substrate-binding, which enables specific substrate recognition for the 1''-O-linkage. The glutamate flap (Glu-42) blocks substrate entrance to Mg(2+) in the unliganded closed state. In presence of substrate, Glu-42 is ejected from the active site: this closed-to-open transition significantly widens the substrate-binding channel and precisely positions the scissile 1''-O-linkage for cleavage while securing tightly 2'- and 3'-hydroxyls of ADP-ribose. Functionally, ADP-ribosylhydrolase that preferentially hydrolyzes the scissile alpha-O-linkage attached to the anomeric C1'' position of ADP-ribose and acts on different substrates, such as proteins ADP-ribosylated on serine and threonine, free poly(ADP-ribose) and O-acetyl-ADP-D-ribose. Specifically acts as a serine mono-ADP-ribosylhydrolase by mediating the removal of mono-ADP-ribose attached to serine residues on proteins, thereby playing a key role in DNA damage response. Serine ADP-ribosylation of proteins constitutes the primary form of ADP-ribosylation of proteins in response to DNA damage. Does not hydrolyze ADP-ribosyl-arginine, -cysteine, -diphthamide, or -asparagine bonds. Also able to degrade protein free poly(ADP-ribose), which is synthesized in response to DNA damage: free poly(ADP-ribose) acts as a potent cell death signal and its degradation by ADPRHL2 protects cells from poly(ADP-ribose)-dependent cell death, a process named parthanatos. Also hydrolyzes free poly(ADP-ribose) in mitochondria. Specifically digests O-acetyl-ADP-D-ribose, a product of deacetylation reactions catalyzed by sirtuins. Specifically degrades 1''-O-acetyl-ADP-D-ribose isomer, rather than 2''-O-acetyl-ADP-D-ribose or 3''-O-acetyl-ADP-D-ribose isomers. In Bos taurus (Bovine), this protein is ADP-ribosylhydrolase ARH3 (ADPRS).